A 667-amino-acid chain; its full sequence is Ribosomal oxygenase 1 (667 aa).

Met1 carries the N-acetylmethionine modification. A compositionally biased stretch (low complexity) spans 1 to 11 (MDGLRASAGLL). The disordered stretch occupies residues 1–99 (MDGLRASAGL…ATGREPHGQL (99 aa)). Basic residues-rich tracts occupy residues 12–22 (RRGRLRRRRQQ) and 35–44 (RPRKIRRQLR). Phosphoserine is present on residues Ser61, Ser64, and Ser108. Residues 322–467 (CSLRLLCPQA…DFLEAVLPLA (146 aa)) enclose the JmjC domain. Residues His368, Asp370, and His433 each coordinate Fe cation.

This sequence belongs to the ROX family. NO66 subfamily. In terms of assembly, interacts with SP7/OSX; the interaction is direct. Interacts with MYC. Interacts with PHF19; leading to its recruitment to H3K36me3 sites. Requires Fe(2+) as cofactor.

It localises to the nucleus. The protein localises to the nucleolus. The protein resides in the nucleoplasm. The catalysed reaction is N(6),N(6)-dimethyl-L-lysyl(36)-[histone H3] + 2 2-oxoglutarate + 2 O2 = L-lysyl(36)-[histone H3] + 2 formaldehyde + 2 succinate + 2 CO2. It catalyses the reaction N(6)-methyl-L-lysyl-[protein] + 2-oxoglutarate + O2 = L-lysyl-[protein] + formaldehyde + succinate + CO2. The enzyme catalyses L-histidyl-[protein] + 2-oxoglutarate + O2 = (3S)-3-hydroxy-L-histidyl-[protein] + succinate + CO2. Functionally, oxygenase that can act as both a histone lysine demethylase and a ribosomal histidine hydroxylase. Specifically demethylates 'Lys-4' (H3K4me) and 'Lys-36' (H3K36me) of histone H3, thereby playing a central role in histone code. Preferentially demethylates trimethylated H3 'Lys-4' (H3K4me3) and monomethylated H3 'Lys-4' (H3K4me1) residues, while it has weaker activity for dimethylated H3 'Lys-36' (H3K36me2). Acts as a regulator of osteoblast differentiation via its interaction with SP7/OSX by demethylating H3K4me and H3K36me, thereby inhibiting SP7/OSX-mediated promoter activation. Also catalyzes demethylation of non-histone proteins, such as CGAS: demethylation of monomethylated CGAS promotes interaction between CGAS and PARP1, followed by PARP1 inactivation. Also catalyzes the hydroxylation of 60S ribosomal protein L8 on 'His-216', thereby playing a role in ribosome biogenesis. Participates in MYC-induced transcriptional activation. The chain is Ribosomal oxygenase 1 (RIOX1) from Bos taurus (Bovine).